The primary structure comprises 1037 residues: Multidrug resistance protein MdtF (1037 aa).

Residues 1 to 9 are Cytoplasmic-facing; sequence MANYFIDRP. A helical membrane pass occupies residues 10 to 28; sequence VFAWVLAIIMMLAGGLAIM. The Periplasmic segment spans residues 29 to 339; sequence NLPVAQYPQI…TPFIEISIQE (311 aa). A helical transmembrane segment spans residues 340–359; it reads VFKTLVEAIILVFLVMYLFL. Residues 360-365 lie on the Cytoplasmic side of the membrane; sequence QNFRAT. The chain crosses the membrane as a helical span at residues 366-385; it reads IIPTIAVPVVILGTFAILSA. Over 386 to 391 the chain is Periplasmic; it reads VGFTIN. Residues 392-413 traverse the membrane as a helical segment; sequence TLTMFGMVLAIGLLVDDAIVVV. Topologically, residues 414-441 are cytoplasmic; it reads ENVERVIAEDKLPPKEATHKSMGQIQRA. Residues 442 to 460 traverse the membrane as a helical segment; the sequence is LVGIAVVLSAVFMPMAFMS. Over 461–473 the chain is Periplasmic; the sequence is GATGEIYRQFSIT. Residues 474-496 form a helical membrane-spanning segment; sequence LISSMLLSVFVAMSLTPALCATI. Topologically, residues 497–536 are cytoplasmic; sequence LKAAPEGGHKPNALFARFNTLFEKSTQHYTDSTRSLLRCT. Residues 537 to 555 traverse the membrane as a helical segment; that stretch reads GRYMVVYLLICAGMAVLFL. Residues 556–870 lie on the Periplasmic side of the membrane; it reads RTPTSFLPEE…SYQEALSSNQ (315 aa). The chain crosses the membrane as a helical span at residues 871 to 890; that stretch reads APALYAISLVVVFLALAALY. Residues 891–896 lie on the Cytoplasmic side of the membrane; it reads ESWSIP. Residues 897–916 form a helical membrane-spanning segment; sequence FSVMLVVPLGVVGALLATDL. Residues 917–922 lie on the Periplasmic side of the membrane; that stretch reads RGLSND. The helical transmembrane segment at 923–944 threads the bilayer; that stretch reads VYFQVGLLTTIGLSAKNAILIV. The Cytoplasmic portion of the chain corresponds to 945 to 972; sequence EFAVEMMQKEGKTPIEAIIEAARMRLRP. A helical transmembrane segment spans residues 973-991; that stretch reads ILMTSLAFILGVLPLVISH. The Periplasmic portion of the chain corresponds to 992–1004; sequence GAGSGAQNAVGTG. Residues 1005-1027 traverse the membrane as a helical segment; sequence VMGGMFAATVLAIYFVPVFFVVV. Residues 1028–1037 are Cytoplasmic-facing; the sequence is EHLFARFKKA.

The protein belongs to the resistance-nodulation-cell division (RND) (TC 2.A.6) family. Homotrimer. Part of the tripartite efflux system MdtEF-TolC, which is composed of an inner membrane transporter, MdtF, a membrane fusion protein, MdtE, and an outer membrane component, TolC. The complex forms a large protein conduit and can translocate molecules across both the inner and outer membranes.

Its subcellular location is the cell inner membrane. Its function is as follows. Part of the tripartite efflux system MdtEF-TolC, which confers resistance to compounds such as rhodamine 6G, erythromycin, doxorubicin, ethidium bromide, TPP, SDS, deoxycholate, crystal violet and benzalkonium. This chain is Multidrug resistance protein MdtF (mdtF), found in Escherichia coli (strain K12).